A 314-amino-acid polypeptide reads, in one-letter code: Ribosomal protein uL3 glutamine methyltransferase (314 aa).

The protein belongs to the protein N5-glutamine methyltransferase family. PrmB subfamily.

It carries out the reaction L-glutaminyl-[ribosomal protein uL3] + S-adenosyl-L-methionine = N(5)-methyl-L-glutaminyl-[ribosomal protein uL3] + S-adenosyl-L-homocysteine + H(+). In terms of biological role, methylates large ribosomal subunit protein uL3 on a specific glutamine residue. The sequence is that of Ribosomal protein uL3 glutamine methyltransferase from Shewanella oneidensis (strain ATCC 700550 / JCM 31522 / CIP 106686 / LMG 19005 / NCIMB 14063 / MR-1).